The sequence spans 480 residues: Gasdermin-C2 (480 aa).

The tract at residues 1 to 226 (MGYSFDRASK…TCVILPSATK (226 aa)) is triggers pyroptosis.

This sequence belongs to the gasdermin family. In terms of assembly, homooligomer; homooligomeric ring-shaped pore complex containing 27-28 subunits when inserted in the membrane. In terms of processing, cleavage by CASP8 relieves autoinhibition by releasing the N-terminal moiety (Gasdermin-C2, N-terminal) that initiates pyroptosis. Palmitoylated.

It is found in the cytoplasm. It localises to the cytosol. The protein localises to the cell membrane. With respect to regulation, the full-length protein before cleavage is inactive: intramolecular interactions between N- and C-terminal domains mediate autoinhibition in the absence of activation signal. The intrinsic pyroptosis-inducing activity is carried by the released N-terminal moiety (Gasdermin-C2, N-terminal) following cleavage by caspase CASP8 in response to type-2 immunity following worm infection. Its function is as follows. This form constitutes the precursor of the pore-forming protein: upon cleavage, the released N-terminal moiety (Gasdermin-C2, N-terminal) binds to membranes and forms pores, triggering pyroptosis. Pore-forming protein that causes membrane permeabilization and pyroptosis in response to type-2 immunity. Produced by the cleavage of gasdermin-C2 in response to type-2 immunity following worm infection. After cleavage, moves to the plasma membrane where it strongly binds to membrane inner leaflet lipids. Homooligomerizes within the membrane and forms pores of 10-15 nanometers (nm) of inner diameter, triggering pyroptosis and lytic cell death in enterocytes. In Mus musculus (Mouse), this protein is Gasdermin-C2.